The following is an 862-amino-acid chain: Eukaryotic translation initiation factor 3 subunit C (862 aa).

Gly residues predominate over residues 1–10; sequence MSRFFYGGGS. The disordered stretch occupies residues 1–81; the sequence is MSRFFYGGGS…DEEKTTVVKS (81 aa). Positions 16–52 are enriched in acidic residues; the sequence is SSDEEELYERDEEEQSEEEESSEEEETSEEGSDDEEG. Residues 601 to 775 form the PCI domain; sequence FHMHINLELL…GAIVFRKGVE (175 aa). Residues 814-862 are disordered; the sequence is RDQGAGARGGRGGGRGGHARGGARFPGQQGRRPGGQQFGGGALGGAIKA. Residues 819-833 are compositionally biased toward gly residues; that stretch reads GARGGRGGGRGGHAR. The span at 835 to 844 shows a compositional bias: low complexity; it reads GARFPGQQGR. Residues 845–862 show a composition bias toward gly residues; the sequence is RPGGQQFGGGALGGAIKA.

The protein belongs to the eIF-3 subunit C family. Component of the eukaryotic translation initiation factor 3 (eIF-3) complex.

Its subcellular location is the cytoplasm. Component of the eukaryotic translation initiation factor 3 (eIF-3) complex, which is involved in protein synthesis of a specialized repertoire of mRNAs and, together with other initiation factors, stimulates binding of mRNA and methionyl-tRNAi to the 40S ribosome. The eIF-3 complex specifically targets and initiates translation of a subset of mRNAs involved in cell proliferation. The chain is Eukaryotic translation initiation factor 3 subunit C (nip1) from Aspergillus clavatus (strain ATCC 1007 / CBS 513.65 / DSM 816 / NCTC 3887 / NRRL 1 / QM 1276 / 107).